The primary structure comprises 338 residues: Phenylalanine--tRNA ligase alpha subunit (338 aa).

E252 is a Mg(2+) binding site.

Belongs to the class-II aminoacyl-tRNA synthetase family. Phe-tRNA synthetase alpha subunit type 1 subfamily. Tetramer of two alpha and two beta subunits. Mg(2+) serves as cofactor.

It is found in the cytoplasm. The enzyme catalyses tRNA(Phe) + L-phenylalanine + ATP = L-phenylalanyl-tRNA(Phe) + AMP + diphosphate + H(+). The protein is Phenylalanine--tRNA ligase alpha subunit of Pseudomonas syringae pv. syringae (strain B728a).